Here is a 288-residue protein sequence, read N- to C-terminus: ATP synthase gamma chain (288 aa).

The protein belongs to the ATPase gamma chain family. F-type ATPases have 2 components, CF(1) - the catalytic core - and CF(0) - the membrane proton channel. CF(1) has five subunits: alpha(3), beta(3), gamma(1), delta(1), epsilon(1). CF(0) has three main subunits: a, b and c.

The protein localises to the cell membrane. Its function is as follows. Produces ATP from ADP in the presence of a proton gradient across the membrane. The gamma chain is believed to be important in regulating ATPase activity and the flow of protons through the CF(0) complex. In Staphylococcus aureus (strain bovine RF122 / ET3-1), this protein is ATP synthase gamma chain.